We begin with the raw amino-acid sequence, 317 residues long: Melanocyte-stimulating hormone receptor (317 aa).

The tract at residues 1–26 (MPVQGSPRSLLGAVNSTPTATPHLRP) is disordered. Residues 1–37 (MPVQGSPRSLLGAVNSTPTATPHLRPAANQTGPQCLE) are Extracellular-facing. Asn-29 carries an N-linked (GlcNAc...) asparagine glycan. The helical transmembrane segment at 38–63 (VSIPDGLFLCLGLVSLVENTLVVAAI) threads the bilayer. Topologically, residues 64–72 (AKNRNLHSP) are cytoplasmic. The chain crosses the membrane as a helical span at residues 73-93 (MYCFVCCLALSDLLVSVSSVL). The Extracellular segment spans residues 94-118 (ETAVLLLLGAGALAAQATVVQLLGN). A helical transmembrane segment spans residues 119 to 140 (VIDVLLCSSMVSSLFFLGAIAM). Residues 141–163 (DRYISIFYALRYHSIVTLARARR) lie on the Cytoplasmic side of the membrane. A helical transmembrane segment spans residues 164-183 (AIAAIWAASMLSSTLFIAYC). The Extracellular portion of the chain corresponds to 184–191 (DHTAALLC). A helical transmembrane segment spans residues 192 to 211 (LVVFFLAMLVLMAVLYVHML). Over 212–240 (TQACQHAQGIARLHKRQRPVQQGWGLKGA) the chain is Cytoplasmic. Residues 241 to 266 (ATLAILLGVFFLCWGPFFLHLTLIAV) traverse the membrane as a helical segment. Topologically, residues 267–279 (CPQHPTCSCIFKN) are extracellular. The helical transmembrane segment at 280 to 300 (FRLFLALIVCNAIVDPLIYAF) threads the bilayer. Over 301–317 (RSQELCKTLKELLLFSW) the chain is Cytoplasmic.

Belongs to the G-protein coupled receptor 1 family. As to quaternary structure, interacts with MGRN1, but does not undergo MGRN1-mediated ubiquitination; this interaction competes with GNAS-binding and thus inhibits agonist-induced cAMP production. Interacts with OPN3; the interaction results in a decrease in MC1R-mediated cAMP signaling and ultimately a decrease in melanin production in melanocytes.

It localises to the cell membrane. In terms of biological role, receptor for MSH (alpha, beta and gamma) and ACTH. The activity of this receptor is mediated by G proteins which activate adenylate cyclase. Mediates melanogenesis, the production of eumelanin (black/brown) and phaeomelanin (red/yellow), via regulation of cAMP signaling in melanocytes. The sequence is that of Melanocyte-stimulating hormone receptor (MC1R) from Hapalemur griseus (Gray gentle lemur).